Reading from the N-terminus, the 94-residue chain is Large ribosomal subunit protein bL31 (94 aa).

Residues 65-94 (YGMADSENDSTDKKKTTNEKKVSDSPSKES) are disordered. A compositionally biased stretch (basic and acidic residues) spans 74–94 (STDKKKTTNEKKVSDSPSKES).

Belongs to the bacterial ribosomal protein bL31 family. Type A subfamily. As to quaternary structure, part of the 50S ribosomal subunit.

In terms of biological role, binds the 23S rRNA. This is Large ribosomal subunit protein bL31 from Prochlorococcus marinus (strain MIT 9211).